Reading from the N-terminus, the 127-residue chain is Large ribosomal subunit protein eL8 (127 aa).

The protein belongs to the eukaryotic ribosomal protein eL8 family. In terms of assembly, part of the 50S ribosomal subunit. Probably part of the RNase P complex.

The protein resides in the cytoplasm. Functionally, multifunctional RNA-binding protein that recognizes the K-turn motif in ribosomal RNA, the RNA component of RNase P, box H/ACA, box C/D and box C'/D' sRNAs. The chain is Large ribosomal subunit protein eL8 from Desulfurococcus amylolyticus (strain DSM 18924 / JCM 16383 / VKM B-2413 / 1221n) (Desulfurococcus kamchatkensis).